We begin with the raw amino-acid sequence, 64 residues long: Alpha-conotoxin CnIA (64 aa).

Positions 1–21 are cleaved as a signal peptide; it reads MGMRMMFTVFLLVVLTTTVVS. The propeptide occupies 22-47; the sequence is FPSDSASDGRDDEAKDERSDIYESKR. 2 disulfide bridges follow: cysteine 51–cysteine 56 and cysteine 52–cysteine 62. Position 54 is a 4-hydroxyproline; in CnIK; partial (proline 54). Cysteine 62 carries the post-translational modification Cysteine amide.

The protein belongs to the conotoxin A superfamily. Expressed by the venom duct.

It is found in the secreted. In terms of biological role, alpha-conotoxins act on postsynaptic membranes, they bind to the nicotinic acetylcholine receptors (nAChR) and thus inhibit them. CnIA and CnIB block muscular nAChR alpha-1/gamma and alpha-1/delta subunits. The polypeptide is Alpha-conotoxin CnIA (Conus consors (Singed cone)).